A 61-amino-acid polypeptide reads, in one-letter code: Translational regulator CsrA (61 aa).

The protein belongs to the CsrA/RsmA family. As to quaternary structure, homodimer; the beta-strands of each monomer intercalate to form a hydrophobic core, while the alpha-helices form wings that extend away from the core.

The protein localises to the cytoplasm. Its function is as follows. A key translational regulator that binds mRNA to regulate translation initiation and/or mRNA stability. Mediates global changes in gene expression, shifting from rapid growth to stress survival by linking envelope stress, the stringent response and the catabolite repression systems. Usually binds in the 5'-UTR; binding at or near the Shine-Dalgarno sequence prevents ribosome-binding, repressing translation, binding elsewhere in the 5'-UTR can activate translation and/or stabilize the mRNA. Its function is antagonized by small RNA(s). In Mannheimia succiniciproducens (strain KCTC 0769BP / MBEL55E), this protein is Translational regulator CsrA.